Reading from the N-terminus, the 467-residue chain is Asparagine--tRNA ligase (467 aa).

This sequence belongs to the class-II aminoacyl-tRNA synthetase family. As to quaternary structure, homodimer.

The protein localises to the cytoplasm. It catalyses the reaction tRNA(Asn) + L-asparagine + ATP = L-asparaginyl-tRNA(Asn) + AMP + diphosphate + H(+). This is Asparagine--tRNA ligase from Pasteurella multocida (strain Pm70).